The following is a 434-amino-acid chain: Histidinol dehydrogenase (434 aa).

3 residues coordinate NAD(+): Y130, Q188, and N211. Residues S237, Q259, and H262 each coordinate substrate. Zn(2+) contacts are provided by Q259 and H262. Active-site proton acceptor residues include E326 and H327. Substrate is bound by residues H327, D360, E414, and H419. Residue D360 coordinates Zn(2+). H419 lines the Zn(2+) pocket.

Belongs to the histidinol dehydrogenase family. As to quaternary structure, homodimer. Requires Zn(2+) as cofactor.

The enzyme catalyses L-histidinol + 2 NAD(+) + H2O = L-histidine + 2 NADH + 3 H(+). Its pathway is amino-acid biosynthesis; L-histidine biosynthesis; L-histidine from 5-phospho-alpha-D-ribose 1-diphosphate: step 9/9. Its function is as follows. Catalyzes the sequential NAD-dependent oxidations of L-histidinol to L-histidinaldehyde and then to L-histidine. The protein is Histidinol dehydrogenase of Salmonella choleraesuis (strain SC-B67).